Consider the following 320-residue polypeptide: Protein TsetseEP (320 aa).

The N-terminal stretch at 1–19 is a signal peptide; it reads MKFFISFAFLCLVLSCVAA. The segment at 192 to 320 is disordered; that stretch reads GLPEPEPEPE…ESKPNSLFNF (129 aa). The span at 194-308 shows a compositional bias: acidic residues; the sequence is PEPEPEPEPE…EPEPEPEPQP (115 aa). The tract at residues 194 to 311 is 59 X 2 AA tandem repeats of P-E; the sequence is PEPEPEPEPE…PEPEPQPEPE (118 aa).

As to expression, expressed in the gut, but not salivary glands, of female and male flies (at protein level). Present in vesicles in midgut cells and in the lumen of the gut.

It is found in the secreted. This is Protein TsetseEP from Glossina morsitans morsitans (Savannah tsetse fly).